The chain runs to 509 residues: tRNA-2-methylthio-N(6)-dimethylallyladenosine synthase (509 aa).

Over residues 1–15 (MNEQQRLASQQANAS) the composition is skewed to polar residues. The segment at 1-22 (MNEQQRLASQQANASTKKEEKD) is disordered. Positions 66 to 184 (RKFYIRTYGC…LPYILKDAMF (119 aa)) constitute an MTTase N-terminal domain. Cysteine 75, cysteine 111, cysteine 145, cysteine 221, cysteine 225, and cysteine 228 together coordinate [4Fe-4S] cluster. Positions 207-437 (RRGDIKAWVN…NELVNEFSAK (231 aa)) constitute a Radical SAM core domain. A TRAM domain is found at 440–503 (KKYEGQIVEV…TWSLNGELVE (64 aa)).

This sequence belongs to the methylthiotransferase family. MiaB subfamily. As to quaternary structure, monomer. Requires [4Fe-4S] cluster as cofactor.

Its subcellular location is the cytoplasm. The enzyme catalyses N(6)-dimethylallyladenosine(37) in tRNA + (sulfur carrier)-SH + AH2 + 2 S-adenosyl-L-methionine = 2-methylsulfanyl-N(6)-dimethylallyladenosine(37) in tRNA + (sulfur carrier)-H + 5'-deoxyadenosine + L-methionine + A + S-adenosyl-L-homocysteine + 2 H(+). Catalyzes the methylthiolation of N6-(dimethylallyl)adenosine (i(6)A), leading to the formation of 2-methylthio-N6-(dimethylallyl)adenosine (ms(2)i(6)A) at position 37 in tRNAs that read codons beginning with uridine. The chain is tRNA-2-methylthio-N(6)-dimethylallyladenosine synthase from Bacillus cytotoxicus (strain DSM 22905 / CIP 110041 / 391-98 / NVH 391-98).